The following is a 339-amino-acid chain: GTP 3',8-cyclase (339 aa).

The Radical SAM core domain maps to 20–241; that stretch reads NFDRKFEYLR…WTQKQSLSHD (222 aa). Arg-29 contributes to the GTP binding site. Residues Cys-36 and Cys-40 each contribute to the [4Fe-4S] cluster site. Tyr-42 is an S-adenosyl-L-methionine binding site. Cys-43 contacts [4Fe-4S] cluster. Arg-78 contacts GTP. Position 82 (Gly-82) interacts with S-adenosyl-L-methionine. Thr-109 contributes to the GTP binding site. Ser-133 is a binding site for S-adenosyl-L-methionine. Position 170 (Lys-170) interacts with GTP. Met-204 is an S-adenosyl-L-methionine binding site. Residues Cys-267 and Cys-270 each coordinate [4Fe-4S] cluster. GTP is bound at residue 272-274; the sequence is RLR. Residue Cys-284 participates in [4Fe-4S] cluster binding.

This sequence belongs to the radical SAM superfamily. MoaA family. As to quaternary structure, monomer and homodimer. It depends on [4Fe-4S] cluster as a cofactor.

The enzyme catalyses GTP + AH2 + S-adenosyl-L-methionine = (8S)-3',8-cyclo-7,8-dihydroguanosine 5'-triphosphate + 5'-deoxyadenosine + L-methionine + A + H(+). Its pathway is cofactor biosynthesis; molybdopterin biosynthesis. Catalyzes the cyclization of GTP to (8S)-3',8-cyclo-7,8-dihydroguanosine 5'-triphosphate. The chain is GTP 3',8-cyclase from Psychromonas ingrahamii (strain DSM 17664 / CCUG 51855 / 37).